The sequence spans 194 residues: dCTP deaminase, dUMP-forming (194 aa).

Residues 105–110, Asp-123, 131–133, Gln-152, Tyr-166, Lys-174, and Gln-178 each bind dCTP; these read RSSMGR and TLE. Glu-133 acts as the Proton donor/acceptor in catalysis.

Belongs to the dCTP deaminase family. As to quaternary structure, homotrimer.

It carries out the reaction dCTP + 2 H2O = dUMP + NH4(+) + diphosphate. It participates in pyrimidine metabolism; dUMP biosynthesis; dUMP from dCTP: step 1/1. Its function is as follows. Bifunctional enzyme that catalyzes both the deamination of dCTP to dUTP and the hydrolysis of dUTP to dUMP without releasing the toxic dUTP intermediate. In Methanobrevibacter smithii (strain ATCC 35061 / DSM 861 / OCM 144 / PS), this protein is dCTP deaminase, dUMP-forming.